The sequence spans 505 residues: Deoxyguanosinetriphosphate triphosphohydrolase (505 aa).

The region spanning 66 to 273 (RLTHSMEVQQ…MEAADDISYC (208 aa)) is the HD domain.

Belongs to the dGTPase family. Type 1 subfamily. As to quaternary structure, homotetramer. Requires Mg(2+) as cofactor.

It catalyses the reaction dGTP + H2O = 2'-deoxyguanosine + triphosphate + H(+). Its function is as follows. dGTPase preferentially hydrolyzes dGTP over the other canonical NTPs. This chain is Deoxyguanosinetriphosphate triphosphohydrolase, found in Salmonella schwarzengrund (strain CVM19633).